Reading from the N-terminus, the 604-residue chain is Aspartate--tRNA(Asp/Asn) ligase (604 aa).

L-aspartate is bound at residue Glu175. The segment at 199–202 (QQFK) is aspartate. The L-aspartate site is built by Arg221 and His456. An ATP-binding site is contributed by 221 to 223 (RDE). Residue Glu496 coordinates ATP. Position 503 (Arg503) interacts with L-aspartate. Residue 548 to 551 (GVDR) coordinates ATP.

It belongs to the class-II aminoacyl-tRNA synthetase family. Type 1 subfamily. Homodimer.

It is found in the cytoplasm. The catalysed reaction is tRNA(Asx) + L-aspartate + ATP = L-aspartyl-tRNA(Asx) + AMP + diphosphate. Its function is as follows. Aspartyl-tRNA synthetase with relaxed tRNA specificity since it is able to aspartylate not only its cognate tRNA(Asp) but also tRNA(Asn). Reaction proceeds in two steps: L-aspartate is first activated by ATP to form Asp-AMP and then transferred to the acceptor end of tRNA(Asp/Asn). The protein is Aspartate--tRNA(Asp/Asn) ligase of Methylobacterium sp. (strain 4-46).